The following is a 282-amino-acid chain: uncharacterized protein (282 aa).

A coiled-coil region spans residues 205–277 (LAQQRRVYAQ…DELQNKARDA (73 aa)).

This is an uncharacterized protein from Treponema pallidum (strain Nichols).